The sequence spans 388 residues: Chorismate synthase (388 aa).

The NADP(+) site is built by Arg-39 and Arg-45. Residues 130-132, 251-252, Gly-296, 311-315, and Arg-337 each bind FMN; these read RSS, NA, and KPIPT.

The protein belongs to the chorismate synthase family. Homotetramer. Requires FMNH2 as cofactor.

The enzyme catalyses 5-O-(1-carboxyvinyl)-3-phosphoshikimate = chorismate + phosphate. It functions in the pathway metabolic intermediate biosynthesis; chorismate biosynthesis; chorismate from D-erythrose 4-phosphate and phosphoenolpyruvate: step 7/7. Functionally, catalyzes the anti-1,4-elimination of the C-3 phosphate and the C-6 proR hydrogen from 5-enolpyruvylshikimate-3-phosphate (EPSP) to yield chorismate, which is the branch point compound that serves as the starting substrate for the three terminal pathways of aromatic amino acid biosynthesis. This reaction introduces a second double bond into the aromatic ring system. The sequence is that of Chorismate synthase from Streptococcus pyogenes serotype M6 (strain ATCC BAA-946 / MGAS10394).